Here is a 580-residue protein sequence, read N- to C-terminus: Arrestin domain-containing protein A (580 aa).

Asparagine 27, asparagine 33, and asparagine 60 each carry an N-linked (GlcNAc...) asparagine glycan. Residues 31 to 54 form a disordered region; sequence NVNTTSSHHHHHSNSGNAEVSFNG. 2 disordered regions span residues 67–86 and 95–114; these read ETHSGHHHHHSNGGNAEISI and MTMSVTDSNSGHHHHHHKES. The helical transmembrane segment at 118 to 138 threads the bilayer; it reads NLSLGGIVGAVVGAVTGGVMI. N-linked (GlcNAc...) asparagine glycosylation is found at asparagine 149, asparagine 341, and asparagine 342. An FYVE-type zinc finger spans residues 468-528; it reads DEHATACRKC…VCEECYPIAT (61 aa). Zn(2+) contacts are provided by cysteine 474, cysteine 477, cysteine 490, cysteine 493, cysteine 498, cysteine 501, cysteine 520, and cysteine 523.

The protein belongs to the arrestin family.

It is found in the membrane. In Dictyostelium discoideum (Social amoeba), this protein is Arrestin domain-containing protein A (adcA).